The primary structure comprises 400 residues: Nicotinate phosphoribosyltransferase (400 aa).

Histidine 220 bears the Phosphohistidine; by autocatalysis mark.

Belongs to the NAPRTase family. Post-translationally, transiently phosphorylated on a His residue during the reaction cycle. Phosphorylation strongly increases the affinity for substrates and increases the rate of nicotinate D-ribonucleotide production. Dephosphorylation regenerates the low-affinity form of the enzyme, leading to product release.

It catalyses the reaction nicotinate + 5-phospho-alpha-D-ribose 1-diphosphate + ATP + H2O = nicotinate beta-D-ribonucleotide + ADP + phosphate + diphosphate. Its pathway is cofactor biosynthesis; NAD(+) biosynthesis; nicotinate D-ribonucleotide from nicotinate: step 1/1. In terms of biological role, catalyzes the synthesis of beta-nicotinate D-ribonucleotide from nicotinate and 5-phospho-D-ribose 1-phosphate at the expense of ATP. The sequence is that of Nicotinate phosphoribosyltransferase from Escherichia coli O7:K1 (strain IAI39 / ExPEC).